The primary structure comprises 247 residues: MAGHSKWANIQHRKGRQDAKRGKLFTKAAKEIIIAAKGGGDPASNARLRAAIAAAKAVNLPKDKIDNAIKKGTGELAGGDILEISYEGYGPGGVALIVEAATDNRNRTVAEVRHILSKHGGSMGEAGCVGWMFERKGVITLDGGKYTEDQVMEAALEAGADDVRDEGGTWEIHTAVSDFAAVRDALEAAGMEMDSAELSMIPQNTVEVDAETGRKLMRLVDALEDNDDVQNVHANFDLPDEVLAELE.

Positions 1–21 (MAGHSKWANIQHRKGRQDAKR) are disordered.

The protein belongs to the TACO1 family.

It is found in the cytoplasm. This Nitratidesulfovibrio vulgaris (strain DSM 19637 / Miyazaki F) (Desulfovibrio vulgaris) protein is Probable transcriptional regulatory protein DvMF_3201.